An 846-amino-acid polypeptide reads, in one-letter code: Homeobox protein 12 (846 aa).

Low complexity-rich tracts occupy residues 78–94 (IIGSSSNTLSTPSVQAT), 160–170 (PLSSSSTVVPA), 237–249 (GNHNNNNNNYNYN), 289–301 (QPQSQSQSQQLQP), 309–321 (LQPQLQSQPQSQQ), 331–352 (NNNNNNNNNNNNNNNNNNNNNN), 394–443 (NYNQ…SNSN), and 458–482 (NNNNNNNKTFQQTSQQQQQQQQQIY). Disordered stretches follow at residues 78–103 (IIGSSSNTLSTPSVQATPPTPPPSSS), 151–177 (IVQPPPPSTPLSSSSTVVPASTPPPSV), 230–249 (NGNGNGNGNHNNNNNNYNYN), 286–374 (GTKQ…SSSP), 394–482 (NYNQ…QQIY), and 515–571 (FKQN…NNQF). The segment covering 524-546 (NNDDDDDDDDDEEEEEEEEDDND) has biased composition (acidic residues). Residues 553–604 (SYDEENNNNNNNNNNNNQFKNESIIIGDNYYEIINDRIKSIKQKLHFLEKNS) adopt a coiled-coil conformation. The segment covering 559 to 569 (NNNNNNNNNNN) has biased composition (low complexity). Residues 773-835 (DKKNRRTLND…NKRSREKNQR (63 aa)) constitute a DNA-binding region (homeobox).

It is found in the nucleus. Putative transcription factor. This is Homeobox protein 12 (hbx12) from Dictyostelium discoideum (Social amoeba).